Consider the following 248-residue polypeptide: Triosephosphate isomerase (248 aa).

Lys12 contacts substrate. His94 (electrophile) is an active-site residue. The Proton acceptor role is filled by Glu165.

Belongs to the triosephosphate isomerase family. As to quaternary structure, homodimer.

The enzyme catalyses D-glyceraldehyde 3-phosphate = dihydroxyacetone phosphate. The protein operates within carbohydrate biosynthesis; gluconeogenesis. Its pathway is carbohydrate degradation; glycolysis; D-glyceraldehyde 3-phosphate from glycerone phosphate: step 1/1. This is Triosephosphate isomerase (Tpi) from Bombyx mori (Silk moth).